The chain runs to 209 residues: MPLQVKYLGLQPYESTWEAMQRFTNERTEHTPDELWVVEHPPVFTQGLNGQAKHLQAFALEQNIPIIQTDRGGQVTYHGPGQIIIYVLLDLKRAQLGVRDLVHRMEKAIIEFLCDLSISADARPDAPGVYVDGQKIASLGLKIRKQKSYHGLALNFDMDLTPFSWITPCGLEGIQMTQVSHFIQQPDQLASQTALIKALCHQLQPEIDS.

The BPL/LPL catalytic domain maps to 29-209; sequence EHTPDELWVV…CHQLQPEIDS (181 aa). Residues 71–78, 138–140, and 151–153 contribute to the substrate site; these read RGGQVTYH, SLG, and GLA. Cysteine 169 serves as the catalytic Acyl-thioester intermediate.

The protein belongs to the LipB family.

The protein resides in the cytoplasm. It carries out the reaction octanoyl-[ACP] + L-lysyl-[protein] = N(6)-octanoyl-L-lysyl-[protein] + holo-[ACP] + H(+). It participates in protein modification; protein lipoylation via endogenous pathway; protein N(6)-(lipoyl)lysine from octanoyl-[acyl-carrier-protein]: step 1/2. Catalyzes the transfer of endogenously produced octanoic acid from octanoyl-acyl-carrier-protein onto the lipoyl domains of lipoate-dependent enzymes. Lipoyl-ACP can also act as a substrate although octanoyl-ACP is likely to be the physiological substrate. In Hydrogenovibrio crunogenus (strain DSM 25203 / XCL-2) (Thiomicrospira crunogena), this protein is Octanoyltransferase.